Here is a 142-residue protein sequence, read N- to C-terminus: Large ribosomal subunit protein uL11 (142 aa).

It belongs to the universal ribosomal protein uL11 family. As to quaternary structure, part of the ribosomal stalk of the 50S ribosomal subunit. Interacts with L10 and the large rRNA to form the base of the stalk. L10 forms an elongated spine to which L12 dimers bind in a sequential fashion forming a multimeric L10(L12)X complex. Post-translationally, one or more lysine residues are methylated.

Functionally, forms part of the ribosomal stalk which helps the ribosome interact with GTP-bound translation factors. This is Large ribosomal subunit protein uL11 from Histophilus somni (strain 129Pt) (Haemophilus somnus).